Here is a 59-residue protein sequence, read N- to C-terminus: Sec-independent protein translocase protein TatA (59 aa).

A helical membrane pass occupies residues 1-21 (MFSNIGFPGLILILVAVLILF).

The protein belongs to the TatA/E family. In terms of assembly, forms a complex with TatC.

It localises to the cell membrane. Functionally, part of the twin-arginine translocation (Tat) system that transports large folded proteins containing a characteristic twin-arginine motif in their signal peptide across membranes. TatA could form the protein-conducting channel of the Tat system. The polypeptide is Sec-independent protein translocase protein TatA (Bacillus mycoides (strain KBAB4) (Bacillus weihenstephanensis)).